A 1121-amino-acid chain; its full sequence is MDPFTEKLLERTRARRENLQRKMAERPTAVARSAPHAKRGREPLSEASNQQQPLPGGEEKSCTKPSPSKKRCSDKIEVGAPDLENTEPIDVAKPCSPMPAPRQAKPPAPAAISESVAAPAALLSADRGLNSGSEASATSSVKTRMQRLAEQRRHWDSDLTDDVSESSYFAPVPTEDKAASPSKPPISNASATPVGRRGRLANLAATICSWEDDVSHSSAKQNSVQEQPGTACLSKSSSASGASASINSSSVQQEATCCSPRDGNASVRKDPSSNAAHGPLLSASVSSSVKASSPVTAATFITENREAQNPELLHKTASPLKTEARKPCEKPTLSQGAQPKEEANREVCLQSQSKDKLATPGGRGIKPFLERFGERCQEHSKESPSYRASHKTPNITPNTKAIQERLFKQNTCSSTTHLAQQLKQEREKELACLRGRLDKGNLWSAEKNEKSRSKHLETKQEVHCQNTPLKKHQTVASTPLTSVTDKVAENEPAVKLSSTEPAGSTESEMTKSSPLKITLFLEEEKSLKVASDLEVEQNTEAVREVEMSVDDEDINSSRVINDIFSDVLEEGELDVEKSQEEMDQVGAENSEEQEDALNISSMSLLAPLAQTVGVVSLENVISSPPSELRDSNLSAASPKPGKFQRTRVPRAESADSLGSEDRDLLYSIDAYRSQRFKETERPSIKQVIVRKEDVTSKLGEKKNVFSGQVNIKQKMQELNNDINLQQTVIYQASQALNCCVDEEHGKGSLEEAEAERLLLIATEKRALLIDELNKLKSEGPQRRNKTSVISQSEFAPSKGSVTLSEICLPLKADFVCSTAQKTDASNYYYLIMLKAGAEQMVATPLASTANSLSGDALTFPTTFTLHDVSNDFEINIEVYSLVQKKDSLGPDKKKKASKSKAITPKRLLTSITSKSSLHSSVMASPGGLGAVRTSNFTLVGSHTLSLSSVGDTKFALDKVPFLSPLEGHICLKISCQVNSAVEEKGFLTIFEDVSGFGAWHRRWCVLSGNCISYWTYPDDERRKNPIGRINLANCISHQIEPANREFCARRNTLELITVRPQREDDRETLVSQCRDTLCVTKNWLSADTKEERDLWMQKLNQVIVDIRLWQPDACYKPVGKP.

Position 1 is an N-acetylmethionine (Met-1). The segment covering 1–25 (MDPFTEKLLERTRARRENLQRKMAE) has biased composition (basic and acidic residues). The tract at residues 1–45 (MDPFTEKLLERTRARRENLQRKMAERPTAVARSAPHAKRGREPLS) is required for ubiquitination. Disordered stretches follow at residues 1–113 (MDPF…AAIS), 125–196 (ADRG…PVGR), and 212–402 (DDVS…TKAI). The interaction with CD2AP stretch occupies residues 1 to 154 (MDPFTEKLLE…MQRLAEQRRH (154 aa)). The nuclear localization stretch occupies residues 1–228 (MDPFTEKLLE…AKQNSVQEQP (228 aa)). Phosphoserine is present on residues Ser-73 and Ser-96. Over residues 96–109 (SPMPAPRQAKPPAP) the composition is skewed to pro residues. Positions 130–143 (NSGSEASATSSVKT) are enriched in polar residues. The segment covering 147–157 (RLAEQRRHWDS) has biased composition (basic and acidic residues). Ser-180 is subject to Phosphoserine. Thr-192 carries the phosphothreonine modification. The segment covering 216–228 (HSSAKQNSVQEQP) has biased composition (polar residues). Ser-223, Ser-250, and Ser-259 each carry phosphoserine. The tract at residues 229-671 (GTACLSKSSS…RDLLYSIDAY (443 aa)) is interaction with F-actin. The segment covering 234 to 250 (SKSSSASGASASINSSS) has biased composition (low complexity). Positions 282 to 298 (SASVSSSVKASSPVTAA) are enriched in low complexity. Basic and acidic residues predominate over residues 303–314 (ENREAQNPELLH). Thr-316 carries the post-translational modification Phosphothreonine. 2 positions are modified to phosphoserine: Ser-318 and Ser-334. Position 359 is a phosphothreonine (Thr-359). Lys-366 bears the N6-acetyllysine mark. The span at 368 to 384 (FLERFGERCQEHSKESP) shows a compositional bias: basic and acidic residues. A compositionally biased stretch (polar residues) spans 391–401 (KTPNITPNTKA). Phosphothreonine occurs at positions 392 and 396. Residues Ser-414 and Ser-444 each carry the phosphoserine modification. A disordered region spans residues 490–511 (NEPAVKLSSTEPAGSTESEMTK). A compositionally biased stretch (polar residues) spans 496–511 (LSSTEPAGSTESEMTK). 3 positions are modified to phosphoserine: Ser-513, Ser-548, and Ser-556. A coiled-coil region spans residues 564–599 (FSDVLEEGELDVEKSQEEMDQVGAENSEEQEDALNI). Residues 623–635 (SPPSELRDSNLSA) show a composition bias toward polar residues. Positions 623-656 (SPPSELRDSNLSAASPKPGKFQRTRVPRAESADS) are disordered. Phosphoserine occurs at positions 637, 653, 656, and 659. Tyr-666 carries the phosphotyrosine modification. A phosphoserine mark is found at Ser-673, Ser-683, Ser-787, and Ser-924. The localization to the cleavage furrow stretch occupies residues 725 to 1121 (QQTVIYQASQ…DACYKPVGKP (397 aa)). The region spanning 980 to 1104 (AVEEKGFLTI…WMQKLNQVIV (125 aa)) is the PH domain.

As to quaternary structure, interacts with F-actin. Interacts with CD2AP. May interact with RHOA. Interacts with FZR1/CDH1 during mitotic exit. Phosphorylated during mitosis. Post-translationally, ubiquitinated, and this requires FZR1/CDH1.

The protein resides in the nucleus. The protein localises to the cytoplasm. Its subcellular location is the cytoskeleton. It localises to the cell cortex. It is found in the cell projection. The protein resides in the bleb. Functionally, required for cytokinesis. Essential for the structural integrity of the cleavage furrow and for completion of cleavage furrow ingression. Plays a role in bleb assembly during metaphase and anaphase of mitosis. May play a significant role in podocyte cell migration. In Mus musculus (Mouse), this protein is Anillin (Anln).